The chain runs to 217 residues: Adr-2-binding protein 1 (217 aa).

The interval 33-65 (ARPEPQHDSLKRRNTTSSIAKKKAKMTRGDEQI) is disordered. The span at 44–58 (RRNTTSSIAKKKAKM) shows a compositional bias: basic residues.

As to quaternary structure, interacts with double-stranded RNA-specific adenosine deaminase adr-2. As to expression, expressed in main body hypodermal cells, the hypodermal seam cells, pharynx, intestine and some neurons.

Its subcellular location is the nucleus. Functionally, required for the A-I editing activity of the double-stranded RNA-specific adenosine deaminase adr-2 by facilitating adr-2 nuclear localization. In Caenorhabditis elegans, this protein is Adr-2-binding protein 1.